The chain runs to 591 residues: Mono(ADP-ribosyl)transferase SpvB (591 aa).

The 204-residue stretch at 373 to 576 (PMMGGNSSRP…LRLSDDATAD (204 aa)) folds into the TR mART core domain. NAD(+) is bound by residues Arg-414 and 471–477 (RGLKLDK). Active-site residues include Arg-471, Ser-501, and Glu-538. NAD(+) is bound at residue Glu-538.

Belongs to the SpvB family.

The protein resides in the secreted. The catalysed reaction is L-arginyl-[protein] + NAD(+) = N(omega)-(ADP-D-ribosyl)-L-arginyl-[protein] + nicotinamide + H(+). With respect to regulation, inhibited by novobiocin. In terms of biological role, mono-ADP-ribosylates eukaryotic muscle and non-muscle actin on 'Arg-177'. ADP-ribosylates all actins tested, has more activity on nonmuscle beta/gamma-actin than on muscle alpha-actin. Prefers monomeric G-actin but can weakly ADP-ribosylate F-actin. ADP-ribosylation prevents the polymerization of G-actin to F-actin, causing actin filament depolymerization, destruction of the cytoskeleton and cytotoxicity. Does not possess NAD(+)-glycohydrolase activity, unlike most mART enzymes. The chain is Mono(ADP-ribosyl)transferase SpvB (spvB) from Salmonella typhimurium.